The chain runs to 605 residues: MKEIGSKPRKLLPLCFIIFLCFCSSVMAADEDDIRCLRGLKASLTDPQNALKSWNFDNTTLGFLCNFVGVSCWNNQENRVINLELRDMGLSGKIPDSLQYCASLQKLDLSSNRLSGNIPTELCNWLPFLVSLDLSNNELNGEIPPDLAKCSFVNSLVLSDNRLSGQIPVQFSALGRLGRFSVANNDLSGRIPVFFSSPSYSSDDFSGNKGLCGRPLSSSCGGLSKKNLGIIIAAGVFGAAASMLLAFGIWWYYHLKWTRRRRSGLTEVGVSGLAQRLRSHKLTQVSLFQKPLVKVKLGDLMAATNNFNSENIIVSTRTGTTYKALLPDGSALAVKHLSTCKLGEREFRYEMNQLWELRHSNLAPLLGFCVVEEEKFLVYKYMSNGTLHSLLDSNRGELDWSTRFRIGLGAARGLAWLHHGCRPPILHQNICSSVILIDEDFDARIIDSGLARLMVPSDNNESSFMTGDLGEFGYVAPEYSTTMLASLKGDVYGLGVVLLELATGLKAVGGEGFKGSLVDWVKQLESSGRIAETFDENIRGKGHDEEISKFVEIALNCVSSRPKERWSMFQAYQSLKAIAEKQGYSFSEQDDDFPLIFDTQENEKV.

The N-terminal stretch at 1–28 (MKEIGSKPRKLLPLCFIIFLCFCSSVMA) is a signal peptide. Topologically, residues 29–229 (ADEDDIRCLR…CGGLSKKNLG (201 aa)) are extracellular. A glycan (N-linked (GlcNAc...) asparagine) is linked at Asn-58. 4 LRR repeats span residues 101-125 (CASL…LCNW), 127-150 (PFLV…LAKC), 152-173 (FVNS…QFSA), and 174-197 (LGRL…FFSS). Residues 230 to 250 (IIIAAGVFGAAASMLLAFGIW) form a helical membrane-spanning segment. Topologically, residues 251–605 (WYYHLKWTRR…IFDTQENEKV (355 aa)) are cytoplasmic. Position 271 is a phosphoserine; by BAK1 (Ser-271). Thr-283 bears the Phosphothreonine; by BAK1 mark. At Ser-286 the chain carries Phosphoserine; by BAK1. Residue Thr-304 is modified to Phosphothreonine; by BAK1. The 272-residue stretch at 307–578 (FNSENIIVST…FQAYQSLKAI (272 aa)) folds into the Protein kinase domain. 313–321 (IVSTRTGTT) contacts ATP. Ser-330 carries the phosphoserine; by BAK1 modification. Position 335 (Lys-335) interacts with ATP. At Ser-389 the chain carries Phosphoserine; by BAK1. At Thr-402 the chain carries Phosphothreonine. Ser-448 and Ser-462 each carry phosphoserine; by BAK1. Phosphothreonine; by BAK1 is present on Thr-466. Tyr-479 carries the post-translational modification Phosphotyrosine. At Thr-482 the chain carries Phosphothreonine. Ser-486 carries the post-translational modification Phosphoserine. At Thr-533 the chain carries Phosphothreonine; by BAK1.

Belongs to the protein kinase superfamily. Ser/Thr protein kinase family. Interacts constitutively with BAK1, when phosphorylated, thereby preventing interaction with the ligand-binding LRR-RLK FLS2. Upon infection, pathogen-associated molecular patterns (PAMP) perception leads to BIR2 release from the BAK1 complex and enables the recruitment of BAK1 into the FLS2 complex. In terms of processing, phosphorylated by BAK1, this interacts promotes interaction with BAK1.

It is found in the cell membrane. Its function is as follows. Pseudokinases lacking protein kinase activity and unable to bind ATP-analogs. Negative regulator of pathogen-associated molecular patterns- (PAMP-) triggered immunity by limiting BAK1-receptor complex formation in the absence of ligands. This is Inactive LRR receptor-like serine/threonine-protein kinase BIR2 from Arabidopsis thaliana (Mouse-ear cress).